We begin with the raw amino-acid sequence, 647 residues long: Epithelial sodium channel subunit beta (647 aa).

The Cytoplasmic segment spans residues Met1–Met57. A helical transmembrane segment spans residues Trp58–Leu78. Residues Thr79–Gly552 lie on the Extracellular side of the membrane. 8 disulfide bridges follow: Cys104/Cys291, Cys215/Cys222, Cys268/Cys275, Cys381/Cys468, Cys406/Cys464, Cys410/Cys460, Cys419/Cys446, and Cys421/Cys435. The chain crosses the membrane as a helical span at residues Ser553 to Leu573. Topologically, residues Lys574–Asn647 are cytoplasmic. Residues Arg586 to Asn647 form a disordered region.

The protein belongs to the amiloride-sensitive sodium channel (TC 1.A.6) family. SCNN1B subfamily. In terms of assembly, component of the heterotrimeric epithelial sodium channel (ENaC) composed of an alpha/SCNN1A, a beta/SCNN1B and a gamma/SCNN1G subunit.

The protein resides in the apical cell membrane. It localises to the cytoplasmic vesicle membrane. The enzyme catalyses Na(+)(in) = Na(+)(out). Originally identified and characterized by its inhibition by the diuretic drug amiloride. Functionally, this is one of the three pore-forming subunits of the heterotrimeric epithelial sodium channel (ENaC), a critical regulator of sodium balance and fluid homeostasis. ENaC operates in epithelial tissues, where it mediates the electrodiffusion of sodium ions from extracellular fluid through the apical membrane of cells, with water following osmotically. This chain is Epithelial sodium channel subunit beta (scnn1b-a), found in Xenopus laevis (African clawed frog).